The chain runs to 331 residues: Pantothenate kinase (331 aa).

109-116 provides a ligand contact to ATP; sequence GSVAVGKS.

Belongs to the prokaryotic pantothenate kinase family.

The protein resides in the cytoplasm. The enzyme catalyses (R)-pantothenate + ATP = (R)-4'-phosphopantothenate + ADP + H(+). Its pathway is cofactor biosynthesis; coenzyme A biosynthesis; CoA from (R)-pantothenate: step 1/5. The polypeptide is Pantothenate kinase (Sinorhizobium fredii (strain NBRC 101917 / NGR234)).